A 358-amino-acid polypeptide reads, in one-letter code: Transmembrane protein 144 homolog B (358 aa).

A run of 10 helical transmembrane segments spans residues 6–26 (VIGY…YVPV), 35–55 (LAFT…AMFI), 60–79 (IFDP…NFCV), 86–108 (IGIG…FTGK), 122–142 (PALN…FFFI), 211–231 (ILGI…MVPM), 244–264 (LSFV…VFIV), 279–299 (IFPS…LMVA), 307–327 (IGFP…SVFY), and 337–357 (LLIL…LALS).

The protein belongs to the TMEM144 family.

It localises to the membrane. In Dictyostelium discoideum (Social amoeba), this protein is Transmembrane protein 144 homolog B (tmem144B).